A 279-amino-acid chain; its full sequence is NAD kinase (279 aa).

The active-site Proton acceptor is the D63. NAD(+) is bound by residues 63–64, R68, 133–134, and D163; these read DG and NE.

Belongs to the NAD kinase family. It depends on a divalent metal cation as a cofactor.

The protein localises to the cytoplasm. The catalysed reaction is NAD(+) + ATP = ADP + NADP(+) + H(+). Involved in the regulation of the intracellular balance of NAD and NADP, and is a key enzyme in the biosynthesis of NADP. Catalyzes specifically the phosphorylation on 2'-hydroxyl of the adenosine moiety of NAD to yield NADP. This Protochlamydia amoebophila (strain UWE25) protein is NAD kinase.